Reading from the N-terminus, the 111-residue chain is MGSSSFLVLMVSLTLVTLVAVEGVKEDIEKAGVCPADNVRCFKSDPPQCHTDQDCLGERKCCYLHCGFKCVIPVKELEEGGNKDEDVSRPYPEPGWEAKCPGSSSTRCPQK.

The N-terminal stretch at 1–23 (MGSSSFLVLMVSLTLVTLVAVEG) is a signal peptide. The WAP domain occupies 27–74 (DIEKAGVCPADNVRCFKSDPPQCHTDQDCLGERKCCYLHCGFKCVIPV). Cystine bridges form between cysteine 34-cysteine 62, cysteine 41-cysteine 66, cysteine 49-cysteine 61, and cysteine 55-cysteine 70. The segment at 80–111 (GGNKDEDVSRPYPEPGWEAKCPGSSSTRCPQK) is disordered. Polar residues predominate over residues 102 to 111 (GSSSTRCPQK).

The protein localises to the secreted. Its function is as follows. Antibacterial protein. Putative acid-stable proteinase inhibitor. This is WAP four-disulfide core domain protein 12 (WFDC12) from Pan troglodytes (Chimpanzee).